Reading from the N-terminus, the 70-residue chain is Potassium channel toxin kappa-KTx 2.5 (70 aa).

The N-terminal stretch at 1 to 26 (MESSRKSYVLMLFLAFVIMNVCSVSG) is a signal peptide. The propeptide occupies 27 to 42 (EPKDGEIAGFEMEEAR). Cystine bridges form between Cys46–Cys64 and Cys50–Cys60.

It belongs to the short scorpion toxin superfamily. Potassium channel inhibitor kappa-KTx family. Kappa-KTx 2 subfamily. As to expression, expressed by the venom gland.

Its subcellular location is the secreted. In terms of biological role, voltage-independently blocks potassium currents on hKv1.1/KCNA1 (IC(50)=217 uM), and hKv1.4/KCNA4 (IC(50)=71 uM) (expressed in CHO cells). The polypeptide is Potassium channel toxin kappa-KTx 2.5 (Opisthacanthus cayaporum (South American scorpion)).